Here is a 303-residue protein sequence, read N- to C-terminus: Ubiquinone biosynthesis protein COQ4, mitochondrial (303 aa).

Zn(2+)-binding residues include H191, D192, H195, and E207.

This sequence belongs to the COQ4 family. Component of a multi-subunit COQ enzyme complex, composed of at least COQ3, COQ4, COQ5, COQ6, COQ7 and COQ9. The cofactor is Zn(2+).

It is found in the mitochondrion inner membrane. It carries out the reaction a 4-hydroxy-3-methoxy-5-(all-trans-polyprenyl)benzoate + H(+) = a 2-methoxy-6-(all-trans-polyprenyl)phenol + CO2. It participates in cofactor biosynthesis; ubiquinone biosynthesis. In terms of biological role, lyase that catalyzes the C1-decarboxylation of 4-hydroxy-3-methoxy-5-(all-trans-polyprenyl)benzoic acid into 2-methoxy-6-(all-trans-polyprenyl)phenol during ubiquinone biosynthesis. The chain is Ubiquinone biosynthesis protein COQ4, mitochondrial from Komagataella phaffii (strain GS115 / ATCC 20864) (Yeast).